We begin with the raw amino-acid sequence, 97 residues long: Defensin-like protein 245 (97 aa).

The N-terminal stretch at 1-24 (MKFAAILLVTCVLFSLLPSHLSQG) is a signal peptide. 4 disulfides stabilise this stretch: cysteine 39–cysteine 96, cysteine 50–cysteine 79, cysteine 58–cysteine 89, and cysteine 77–cysteine 91.

It belongs to the DEFL family. As to expression, flower buds and roots.

The protein localises to the secreted. In Arabidopsis thaliana (Mouse-ear cress), this protein is Defensin-like protein 245 (SCRL4).